The sequence spans 267 residues: Putative F-box protein At1g61060 (267 aa).

One can recognise an F-box domain in the interval Asp-15–Ile-63.

This Arabidopsis thaliana (Mouse-ear cress) protein is Putative F-box protein At1g61060.